The chain runs to 471 residues: Argininosuccinate lyase (471 aa).

This sequence belongs to the lyase 1 family. Argininosuccinate lyase subfamily.

It localises to the cytoplasm. The catalysed reaction is 2-(N(omega)-L-arginino)succinate = fumarate + L-arginine. It participates in amino-acid biosynthesis; L-arginine biosynthesis; L-arginine from L-ornithine and carbamoyl phosphate: step 3/3. The polypeptide is Argininosuccinate lyase (Cereibacter sphaeroides (strain ATCC 17025 / ATH 2.4.3) (Rhodobacter sphaeroides)).